The primary structure comprises 86 residues: Defensin-like SRCA-homolog protein (86 aa).

Positions 1 to 26 (MRCVVLFMVSCLLIVLLINHFEEVEA) are cleaved as a signal peptide. Intrachain disulfides connect Cys32–Cys84, Cys42–Cys70, Cys52–Cys79, and Cys68–Cys81.

The protein belongs to the DEFL family.

The protein localises to the secreted. Its function is as follows. Involved in male-mediated self-incompatibility. The polypeptide is Defensin-like SRCA-homolog protein (SCR37) (Arabidopsis lyrata (Lyre-leaved rock-cress)).